The following is a 343-amino-acid chain: Phosphoribosylformylglycinamidine cyclo-ligase (343 aa).

It belongs to the AIR synthase family.

The protein localises to the cytoplasm. It catalyses the reaction 2-formamido-N(1)-(5-O-phospho-beta-D-ribosyl)acetamidine + ATP = 5-amino-1-(5-phospho-beta-D-ribosyl)imidazole + ADP + phosphate + H(+). It participates in purine metabolism; IMP biosynthesis via de novo pathway; 5-amino-1-(5-phospho-D-ribosyl)imidazole from N(2)-formyl-N(1)-(5-phospho-D-ribosyl)glycinamide: step 2/2. This chain is Phosphoribosylformylglycinamidine cyclo-ligase, found in Staphylococcus epidermidis (strain ATCC 35984 / DSM 28319 / BCRC 17069 / CCUG 31568 / BM 3577 / RP62A).